Consider the following 298-residue polypeptide: uncharacterized protein (298 aa).

Over residues 1 to 17 the composition is skewed to basic and acidic residues; the sequence is MLTKSAENKRNRKDDSM. Positions 1–22 are disordered; that stretch reads MLTKSAENKRNRKDDSMRPGQQ. Positions 167 to 227 constitute an S1 motif domain; the sequence is NKELTGTVYR…EDGSVNLSLL (61 aa).

This is an uncharacterized protein from Bacillus subtilis (strain 168).